The chain runs to 851 residues: Glutathione transporter 1 (851 aa).

The segment covering 1–14 (MTARNSASIPTSIR) has biased composition (polar residues). Positions 1–116 (MTARNSASIP…LDNETDSEVE (116 aa)) are disordered. Asn-32 carries N-linked (GlcNAc...) asparagine glycosylation. Over residues 33 to 68 (LSTKTASKTSLTFRQSSSDESTSSYSGNHHNINIQH) the composition is skewed to low complexity. Over residues 74–92 (FRTNSSSFSPNDYSISESP) the composition is skewed to polar residues. N-linked (GlcNAc...) asparagine glycosylation occurs at Asn-77. At Ser-93 the chain carries Phosphoserine. Residues 105–134 (VQLDNETDSEVESEVEELERELEAIEDSVY) adopt a coiled-coil conformation. Asn-109 is a glycosylation site (N-linked (GlcNAc...) asparagine). The next 2 helical transmembrane spans lie at 156-176 (TWVL…FFSL) and 179-199 (PALS…GKLL). N-linked (GlcNAc...) asparagine glycosylation is present at Asn-256. 4 helical membrane passes run 259-279 (WGYK…FAGL), 282-302 (RWIV…TVLF), 333-353 (FFAY…FIFK), and 405-425 (WVIC…VPIL). Residues Asn-452 and Asn-464 are each glycosylated (N-linked (GlcNAc...) asparagine). Transmembrane regions (helical) follow at residues 480–500 (YSMS…HCAL), 531–551 (APQW…IFTV), 560–580 (VWAL…QGVL), 592–612 (IITE…NLMI), and 642–662 (ILFF…VAVQ). A glycan (N-linked (GlcNAc...) asparagine) is linked at Asn-691. The next 3 membrane-spanning stretches (helical) occupy residues 711–731 (YYPL…TWGL), 757–777 (PATG…NYVI), and 791–811 (VLAA…FLCV). N-linked (GlcNAc...) asparagine glycosylation is present at Asn-843.

Belongs to the oligopeptide OPT transporter family.

Its subcellular location is the endoplasmic reticulum membrane. It localises to the cell membrane. Its function is as follows. High-affinity glutathione transporter which plays a role in scavenging glutathione from the extracellular environment for the maintenance of sulfur homeostasis. This chain is Glutathione transporter 1 (pgt1), found in Schizosaccharomyces pombe (strain 972 / ATCC 24843) (Fission yeast).